Reading from the N-terminus, the 130-residue chain is EG45-like domain containing protein 2 (130 aa).

Positions 1–25 (MIKMAVKFVVVMIVFAQILAPIAEA) are cleaved as a signal peptide. The region spanning 28 to 130 (GKAVYYDPPY…GNIRVVYTPI (103 aa)) is the Expansin-like EG45 domain. Residue asparagine 106 is glycosylated (N-linked (GlcNAc...) asparagine).

Expressed in unstressed leaves.

It is found in the secreted. Functionally, plays a systemic role in water and solute homeostasis. This is EG45-like domain containing protein 2 (EGC2) from Arabidopsis thaliana (Mouse-ear cress).